Reading from the N-terminus, the 99-residue chain is NADH-quinone oxidoreductase subunit K (99 aa).

Helical transmembrane passes span 3 to 23 (PDNYLHLSALLFTIGAAGVLL), 28 to 48 (IVVFMCVELMLNAANLAFVAF), and 59 to 79 (VVAFFTMVVAACEVVIGLAII).

This sequence belongs to the complex I subunit 4L family. In terms of assembly, NDH-1 is composed of 14 different subunits. Subunits NuoA, H, J, K, L, M, N constitute the membrane sector of the complex.

It localises to the cell membrane. It carries out the reaction a quinone + NADH + 5 H(+)(in) = a quinol + NAD(+) + 4 H(+)(out). Functionally, NDH-1 shuttles electrons from NADH, via FMN and iron-sulfur (Fe-S) centers, to quinones in the respiratory chain. The immediate electron acceptor for the enzyme in this species is believed to be a menaquinone. Couples the redox reaction to proton translocation (for every two electrons transferred, four hydrogen ions are translocated across the cytoplasmic membrane), and thus conserves the redox energy in a proton gradient. The protein is NADH-quinone oxidoreductase subunit K of Mycobacterium sp. (strain KMS).